Here is a 125-residue protein sequence, read N- to C-terminus: Large ribosomal subunit protein bL12 (125 aa).

Belongs to the bacterial ribosomal protein bL12 family. In terms of assembly, homodimer. Part of the ribosomal stalk of the 50S ribosomal subunit. Forms a multimeric L10(L12)X complex, where L10 forms an elongated spine to which 2 to 4 L12 dimers bind in a sequential fashion. Binds GTP-bound translation factors.

In terms of biological role, forms part of the ribosomal stalk which helps the ribosome interact with GTP-bound translation factors. Is thus essential for accurate translation. The sequence is that of Large ribosomal subunit protein bL12 from Erythrobacter litoralis (strain HTCC2594).